We begin with the raw amino-acid sequence, 144 residues long: 3-dehydroquinate dehydratase (144 aa).

Residue Tyr-22 is the Proton acceptor of the active site. Positions 73, 79, and 86 each coordinate substrate. Residue His-99 is the Proton donor of the active site. Substrate contacts are provided by residues Ile-100–Ser-101 and Arg-110.

It belongs to the type-II 3-dehydroquinase family. As to quaternary structure, homododecamer.

It catalyses the reaction 3-dehydroquinate = 3-dehydroshikimate + H2O. The protein operates within metabolic intermediate biosynthesis; chorismate biosynthesis; chorismate from D-erythrose 4-phosphate and phosphoenolpyruvate: step 3/7. In terms of biological role, catalyzes a trans-dehydration via an enolate intermediate. This Mycobacteroides abscessus (strain ATCC 19977 / DSM 44196 / CCUG 20993 / CIP 104536 / JCM 13569 / NCTC 13031 / TMC 1543 / L948) (Mycobacterium abscessus) protein is 3-dehydroquinate dehydratase.